The chain runs to 633 residues: DNA repair protein XRCC1 (633 aa).

The residue at position 140 (S140) is a Phosphoserine. A Glycyl lysine isopeptide (Lys-Gly) (interchain with G-Cter in SUMO1); alternate cross-link involves residue K176. K176 participates in a covalent cross-link: Glycyl lysine isopeptide (Lys-Gly) (interchain with G-Cter in SUMO2); alternate. Residue T198 is modified to Phosphothreonine. Position 199 is a phosphoserine (S199). At T202 the chain carries Phosphothreonine. A phosphoserine mark is found at S204, S226, and S241. Over residues 221–231 (AASSASPVSRA) the composition is skewed to low complexity. Positions 221–313 (AASSASPVSR…TEPRRPRAGP (93 aa)) are disordered. Over residues 240-257 (ESPKGKRKLDLNQEEKKT) the composition is skewed to basic and acidic residues. At T257 the chain carries Phosphothreonine. Phosphoserine occurs at positions 259 and 266. The span at 277–291 (APTRTPATAPVPARA) shows a compositional bias: low complexity. Position 281 is a phosphothreonine (T281). Positions 299-313 (PRGEGTEPRRPRAGP) are enriched in basic and acidic residues. Residues 315–403 (ELGKILQGVV…RRLPSQRYLM (89 aa)) form the BRCT 1 domain. The residue at position 371 (S371) is a Phosphoserine; by PRKDC. 3 disordered regions span residues 400-462 (RYLM…AASP), 471-490 (EGVQSEGQDNGAEDSGDTED), and 498-536 (QKEHRLPPGQEENGEDPYAGSTDENTDSEEHQEPPDLPV). Phosphoserine occurs at positions 408, 409, 410, and 421. A compositionally biased stretch (low complexity) spans 427–443 (KLPQKQPQTKTKPTQAA). 2 positions are modified to phosphoserine: S446 and S447. 2 positions are modified to phosphothreonine: T453 and T457. Phosphoserine is present on residues S461 and S485. Over residues 481 to 490 (GAEDSGDTED) the composition is skewed to acidic residues. T488 is subject to Phosphothreonine. Position 518 is a phosphoserine (S518). Phosphothreonine occurs at positions 519 and 523. Positions 538-629 (ELPDFFQGKH…KLLPHQLYGV (92 aa)) constitute a BRCT 2 domain.

As to quaternary structure, homodimer. Interacts with polynucleotide kinase (PNK), DNA polymerase-beta (POLB) and DNA ligase III (LIG3). Interacts with APTX and APLF. Interacts with APEX1; the interaction is induced by SIRT1 and increases with the acetylated form of APEX1. Interacts with (poly-ADP-ribosylated) PARP1. In terms of processing, phosphorylation of Ser-371 causes dimer dissociation. Phosphorylation by CK2 promotes interaction with APTX and APLF. Sumoylated. In terms of tissue distribution, expressed in fibroblasts, retinal pigmented epithelial cells and lymphoblastoid cells (at protein level).

The protein localises to the nucleus. It is found in the chromosome. Functionally, scaffold protein involved in DNA single-strand break repair by mediating the assembly of DNA break repair protein complexes. Negatively regulates ADP-ribosyltransferase activity of PARP1 during base-excision repair in order to prevent excessive PARP1 activity. Recognizes and binds poly-ADP-ribose chains: specifically binds auto-poly-ADP-ribosylated PARP1, limiting its activity. This is DNA repair protein XRCC1 from Homo sapiens (Human).